Reading from the N-terminus, the 128-residue chain is Fluoride-specific ion channel FluC 1 (128 aa).

The next 4 membrane-spanning stretches (helical) occupy residues 10–30, 32–52, 59–79, and 93–113; these read VAFFAFWGGLARYGLTEAFSF, GTVIANLLGCFLLAFLTYFFL, AWLTTGLGTGFVGAFTTFSSF, and FGALLYFTGTIAAGFLFAWAG. Residues G71 and T74 each contribute to the Na(+) site.

Belongs to the fluoride channel Fluc/FEX (TC 1.A.43) family.

It is found in the cell membrane. The enzyme catalyses fluoride(in) = fluoride(out). With respect to regulation, na(+) is not transported, but it plays an essential structural role and its presence is essential for fluoride channel function. Functionally, fluoride-specific ion channel. Important for reducing fluoride concentration in the cell, thus reducing its toxicity. The polypeptide is Fluoride-specific ion channel FluC 1 (Lactobacillus delbrueckii subsp. bulgaricus (strain ATCC 11842 / DSM 20081 / BCRC 10696 / JCM 1002 / NBRC 13953 / NCIMB 11778 / NCTC 12712 / WDCM 00102 / Lb 14)).